The following is a 404-amino-acid chain: RNA exonuclease 3 (404 aa).

One can recognise an Exonuclease domain in the interval 243-389 (VLSLDCEMAF…QDAIATMDVV (147 aa)).

The protein belongs to the REXO1/REXO3 family.

It is found in the cytoplasm. It localises to the nucleus. In terms of biological role, 3' to 5' exoribonuclease required for proper 3' end maturation of MRP RNA and of the U5L snRNA. This chain is RNA exonuclease 3 (REX3), found in Saccharomyces cerevisiae (strain ATCC 204508 / S288c) (Baker's yeast).